A 454-amino-acid polypeptide reads, in one-letter code: Kynurenine 3-monooxygenase (454 aa).

The protein belongs to the aromatic-ring hydroxylase family. KMO subfamily. It depends on FAD as a cofactor.

It carries out the reaction L-kynurenine + NADPH + O2 + H(+) = 3-hydroxy-L-kynurenine + NADP(+) + H2O. It functions in the pathway cofactor biosynthesis; NAD(+) biosynthesis; quinolinate from L-kynurenine: step 1/3. Its function is as follows. Catalyzes the hydroxylation of L-kynurenine (L-Kyn) to form 3-hydroxy-L-kynurenine (L-3OHKyn). Required for synthesis of quinolinic acid. The chain is Kynurenine 3-monooxygenase from Salinispora arenicola (strain CNS-205).